A 102-amino-acid polypeptide reads, in one-letter code: Large ribosomal subunit protein uL23 (102 aa).

Belongs to the universal ribosomal protein uL23 family. Part of the 50S ribosomal subunit. Contacts protein L29, and trigger factor when it is bound to the ribosome.

One of the early assembly proteins it binds 23S rRNA. One of the proteins that surrounds the polypeptide exit tunnel on the outside of the ribosome. Forms the main docking site for trigger factor binding to the ribosome. The sequence is that of Large ribosomal subunit protein uL23 from Methylobacillus flagellatus (strain ATCC 51484 / DSM 6875 / VKM B-1610 / KT).